Consider the following 328-residue polypeptide: MKSIKGLGKLLLASSILFSSSAFAKTIIKLGHYNSDIHPSHIALQEYFKKTIENETNHKYEIRLYPNNQLGGEDQIVNGLRNGTIEAGITGLLLQNVDPIFGVWEWPYLFKDNQEAKKVLESPIANKIGQKMEKYGIKLLAYGMNGFRVISSNKKLEKFDDFKGLRLRVPLNSLFVDWAKAMNINPQSMPLSEVFTALEQKVIDGQENPYMLIKDSGLYEVQKYIIQSNHIFSPGLLQISLKTWNKIPKEDQIIFEKAAKLYQEKEWELAIKTELEVKDYLAKHGNEIIVPSEAFKNDMVNASKVLYDSFYKKYDWAKDVVQKINEAK.

The signal sequence occupies residues 1–24; the sequence is MKSIKGLGKLLLASSILFSSSAFA.

Belongs to the bacterial solute-binding protein 7 family.

The protein localises to the periplasm. This is an uncharacterized protein from Haemophilus influenzae (strain ATCC 51907 / DSM 11121 / KW20 / Rd).